Consider the following 71-residue polypeptide: Protein SlyX homolog (71 aa).

This sequence belongs to the SlyX family.

The chain is Protein SlyX homolog from Stutzerimonas stutzeri (strain A1501) (Pseudomonas stutzeri).